The primary structure comprises 452 residues: Chromosomal replication initiator protein DnaA (452 aa).

Residues M1–Q84 form a domain I, interacts with DnaA modulators region. Residues Q84–N110 form a domain II region. The domain III, AAA+ region stretch occupies residues D111 to A329. ATP contacts are provided by G155, G157, K158, and T159. Residues N330–K452 are domain IV, binds dsDNA.

Belongs to the DnaA family. As to quaternary structure, oligomerizes as a right-handed, spiral filament on DNA at oriC.

It localises to the cytoplasm. In terms of biological role, plays an essential role in the initiation and regulation of chromosomal replication. ATP-DnaA binds to the origin of replication (oriC) to initiate formation of the DNA replication initiation complex once per cell cycle. Binds the DnaA box (a 9 base pair repeat at the origin) and separates the double-stranded (ds)DNA. Forms a right-handed helical filament on oriC DNA; dsDNA binds to the exterior of the filament while single-stranded (ss)DNA is stabiized in the filament's interior. The ATP-DnaA-oriC complex binds and stabilizes one strand of the AT-rich DNA unwinding element (DUE), permitting loading of DNA polymerase. After initiation quickly degrades to an ADP-DnaA complex that is not apt for DNA replication. Binds acidic phospholipids. This chain is Chromosomal replication initiator protein DnaA, found in Streptococcus mutans serotype c (strain ATCC 700610 / UA159).